Here is a 329-residue protein sequence, read N- to C-terminus: DNA-directed RNA polymerase subunit alpha (329 aa).

The segment at 1–235 (MQGSVTEFLK…EQLDAFVDLR (235 aa)) is alpha N-terminal domain (alpha-NTD). The segment at 249 to 329 (FDPILLRPVD…NWPPASIAED (81 aa)) is alpha C-terminal domain (alpha-CTD).

Belongs to the RNA polymerase alpha chain family. In terms of assembly, homodimer. The RNAP catalytic core consists of 2 alpha, 1 beta, 1 beta' and 1 omega subunit. When a sigma factor is associated with the core the holoenzyme is formed, which can initiate transcription.

It carries out the reaction RNA(n) + a ribonucleoside 5'-triphosphate = RNA(n+1) + diphosphate. Functionally, DNA-dependent RNA polymerase catalyzes the transcription of DNA into RNA using the four ribonucleoside triphosphates as substrates. The polypeptide is DNA-directed RNA polymerase subunit alpha (Aliivibrio fischeri (strain ATCC 700601 / ES114) (Vibrio fischeri)).